The sequence spans 148 residues: Protein ORM1 (148 aa).

4 consecutive transmembrane segments (helical) span residues 12-32 (WIIH…FPGV), 36-56 (WSWT…FHLI), 89-109 (FLII…HYDL), and 111-131 (MFSW…LPVT).

The protein to yeast YLR350W C-terminus.

It localises to the membrane. The chain is Protein ORM1 (ORM1) from Saccharomyces pastorianus (strain ATCC 76670 / Carlsberg bottom yeast no.2 / CBS 1503 / CLIB 180 / NBRC 10610 / NRRL Y-1525) (Saaz-type lager yeast).